The primary structure comprises 711 residues: Catalase HPII (711 aa).

Residues 1-10 are compositionally biased toward basic and acidic residues; it reads MPSKKTDAPK. Positions 1–27 are disordered; it reads MPSKKTDAPKQSEAAGTQTPDRANTNA. The segment covering 14 to 27 has biased composition (polar residues); that stretch reads AAGTQTPDRANTNA. Active-site residues include H92 and N165. Y379 serves as a coordination point for heme.

The protein belongs to the catalase family. HPII subfamily. The cofactor is heme.

The protein resides in the cytoplasm. It carries out the reaction 2 H2O2 = O2 + 2 H2O. Decomposes hydrogen peroxide into water and oxygen; serves to protect cells from the toxic effects of hydrogen peroxide. The chain is Catalase HPII (katE) from Pseudomonas putida (Arthrobacter siderocapsulatus).